A 391-amino-acid polypeptide reads, in one-letter code: MRAERWSQTVRQIRSPRALRVIPLTALMLISGCGEKEQVSSATPPPDVGVYTVRAQALTLTTDLPGRTSAFRVAEVRPQVSGILQKRSFVEGAEVKLGQQLYQIDPRTYEAQLRRAEANRTSAQNLARRYETLLKTKAVSKQQYDDALAAWKQAEADYQVARIDVQYTRVLSPISGRIGRSTVTEGALVTNGQAQSLATVTQLDPIYVDVTQPITKLLGLQKALESGRLQKTGENQAEVSLTLDDGSAYPLPGTLKFSEVSVDPTTGSVTLRAEFPNPNRKLLPGMFVHALLKEGVQNAAILVPQQAISRDTRGVPSVWVVKADNTVESREIQTLRTVGNAWLISNGVTEGERIITEGVQRVRSGIAVNAVEAKNVNLVDGFAATTEASAN.

The N-terminal stretch at 1–32 (MRAERWSQTVRQIRSPRALRVIPLTALMLISG) is a signal peptide. The N-palmitoyl cysteine moiety is linked to residue Cys33. Cys33 is lipidated: S-diacylglycerol cysteine. A coiled-coil region spans residues 107 to 136 (RTYEAQLRRAEANRTSAQNLARRYETLLKT).

It belongs to the membrane fusion protein (MFP) (TC 8.A.1) family.

It is found in the cell inner membrane. Functionally, the periplasmic linker component of an organic solvent efflux pump. Involved in export of a number of organic solvents, including toluene and styrene. This is the most important solvent efflux pump in this strain, although it can export AMP and some antibiotics. The chain is Toluene efflux pump periplasmic linker protein TtgG (ttgG) from Pseudomonas putida (strain DOT-T1E).